Consider the following 31-residue polypeptide: Delta-conotoxin-like ErVIA (31 aa).

Positions 1–4 (LNKR) are excised as a propeptide. 3 cysteine pairs are disulfide-bonded: Cys5-Cys21, Cys12-Cys25, and Cys20-Cys29.

The protein belongs to the conotoxin O1 superfamily. Expressed by the venom duct.

Its subcellular location is the secreted. Its function is as follows. This toxin activates voltage-gated sodium channels. It shifts the voltage-dependence of activation to more hyperpolarized potentials but has only little effect on channel inactivation. It is active on Nav1.3/SCN3A (EC(50)=3.98 nM), Nav1.4/SCN4A (EC(50)=4.99 nM), Nav1.6/SCN8A (EC(50)=1.27 nM) and Nav1.7/SCN9A (EC(50)=2.42 nM) voltage-gated sodium channels. In vivo, it induces nocifensive or pain-like behaviors in mice when injected intraplantarly. The protein is Delta-conotoxin-like ErVIA of Conus eburneus (Ivory cone).